We begin with the raw amino-acid sequence, 453 residues long: Gastrin/cholecystokinin type B receptor (453 aa).

The Extracellular segment spans residues 1 to 57 (MDLLKLNRSLQGPGPGSGSSLCRPGVSLLNSSSAGNLSCETPRIRGTGTRELELTIR). Residues asparagine 7, asparagine 30, and asparagine 36 are each glycosylated (N-linked (GlcNAc...) asparagine). The chain crosses the membrane as a helical span at residues 58-79 (ITLYAVIFLMSVGGNVLIIVVL). Residues 80-87 (GLSRRLRT) lie on the Cytoplasmic side of the membrane. Residues 88 to 109 (VTNAFLLSLAVSDLLLAVACMP) form a helical membrane-spanning segment. At 110–131 (FTLLPNLMGTFIFGTVICKAVS) the chain is on the extracellular side. A disulfide bridge links cysteine 127 with cysteine 205. Residues 132-150 (YLMGVSVSVSTLNLAAIAL) traverse the membrane as a helical segment. Residues 151–170 (ERYSAICRPLQARVWQTRSH) lie on the Cytoplasmic side of the membrane. A helical transmembrane segment spans residues 171–189 (AARVILATWLLSGLLMVPY). Topologically, residues 190–219 (PVYTVVQPVGPRILQCMHLWPSERVQQMWS) are extracellular. Residues 220–242 (VLLLILLFFIPGVVMAVAYGLIS) traverse the membrane as a helical segment. Residues 243–339 (RELYLGLRFD…KLLAKKRVVR (97 aa)) are Cytoplasmic-facing. Positions 257–276 (SETQSRVRNQGGLPGGAAAP) are disordered. Residues 340-361 (MLLVIVLLFFVCWLPVYSANTW) form a helical membrane-spanning segment. The Extracellular portion of the chain corresponds to 362 to 379 (RAFDGPGARRALAGAPIS). A helical transmembrane segment spans residues 380 to 400 (FIHLLSYTSACANPLVYCFMH). At 401–453 (RRFRQACLDTCARCCPRPPRARPRPLPDEDPPTPSIASLSRLSYTTISTLGPG) the chain is on the cytoplasmic side. Cysteine 414 carries S-palmitoyl cysteine lipidation.

Belongs to the G-protein coupled receptor 1 family.

Its subcellular location is the cell membrane. In terms of biological role, receptor for gastrin and cholecystokinin. The CCK-B receptors occur throughout the central nervous system where they modulate anxiety, analgesia, arousal, and neuroleptic activity. This receptor mediates its action by association with G proteins that activate a phosphatidylinositol-calcium second messenger system. In Mus musculus (Mouse), this protein is Gastrin/cholecystokinin type B receptor (Cckbr).